A 314-amino-acid chain; its full sequence is Porphobilinogen deaminase (314 aa).

Residue C249 is modified to S-(dipyrrolylmethanemethyl)cysteine.

Belongs to the HMBS family. In terms of assembly, monomer. Requires dipyrromethane as cofactor.

It carries out the reaction 4 porphobilinogen + H2O = hydroxymethylbilane + 4 NH4(+). Its pathway is porphyrin-containing compound metabolism; protoporphyrin-IX biosynthesis; coproporphyrinogen-III from 5-aminolevulinate: step 2/4. In terms of biological role, tetrapolymerization of the monopyrrole PBG into the hydroxymethylbilane pre-uroporphyrinogen in several discrete steps. This chain is Porphobilinogen deaminase, found in Brucella suis biovar 1 (strain 1330).